The sequence spans 382 residues: MQDAAPRLTFTLRDEERLMMKIGVFVPIGNNGWLISTHAPQYMPTFELNKAIVQKAEHYHFDFALSMIKLRGFGGKTEFWDHNLESFTLMAGLAAVTSRIQIYATAATLTLPPAIVARMAATIDSISGGRFGVNLVTGWQKPEYEQMGIWPGDDYFSRRYDYLTEYVQVLRDLWGTGKSDFKGDFFTMNDCRVSPQPSVPMKVICAGQSDAGMAFSAQYADFNFCFGKGVNTPTAFAPTAARMKQAAEQSGRDVGSYVLFMVIADETDDAARAKWEHYKAGADEEALSWLTEQSQKDTRSGTDTNVRQMADPTSAVNINMGTLVGSYASVARMLDEVASVPGAEGVLLTFDDFLSGIETFGERIQPLMQCRAHLPALTQEVA.

FMN is bound by residues 68–69 (IK), Asn134, Glu143, 159–160 (RY), and Ser209.

This sequence belongs to the NtaA/SnaA/DszA monooxygenase family. RutA subfamily.

The catalysed reaction is uracil + FMNH2 + NADH + O2 = (Z)-3-ureidoacrylate + FMN + NAD(+) + H2O + H(+). The enzyme catalyses thymine + FMNH2 + NADH + O2 = (Z)-2-methylureidoacrylate + FMN + NAD(+) + H2O + H(+). Catalyzes the pyrimidine ring opening between N-3 and C-4 by an unusual flavin hydroperoxide-catalyzed mechanism, adding oxygen atoms in the process to yield ureidoacrylate peracid, that immediately reacts with FMN forming ureidoacrylate and FMN-N(5)-oxide. The FMN-N(5)-oxide reacts spontaneously with NADH to produce FMN. Requires the flavin reductase RutF to regenerate FMN in vivo. This chain is Pyrimidine monooxygenase RutA, found in Escherichia coli (strain SE11).